Reading from the N-terminus, the 295-residue chain is MSKDIATPGRTTEILKKYGFLFKKSLGQNFLIDSNILTRITDTAEITKETNVIEIGPGIGALTEQLAKTANEVVAFEIDQRLLPILDDTLSNYDNVRVVHNDVLKADVAEVITEQFAKPELPLKIVANLPYYVTTPIILKLLHDNIPADSMTFMLQKEVADRISAVPSTKSYGSLTIAIQFYMEAELAFIVPKTVFMPQPNVDSAVIHLKRRKEPLAKVNDEEFFFEVTRASFAQRRKTLWNNLASKFPALKPRKEELIEGLNAIGIDLIRRGETLDIPEFAKLSNFLADFLAEK.

S-adenosyl-L-methionine contacts are provided by Asn29, Leu31, Gly56, Glu77, Asp102, and Asn128.

This sequence belongs to the class I-like SAM-binding methyltransferase superfamily. rRNA adenine N(6)-methyltransferase family. RsmA subfamily.

The protein localises to the cytoplasm. The catalysed reaction is adenosine(1518)/adenosine(1519) in 16S rRNA + 4 S-adenosyl-L-methionine = N(6)-dimethyladenosine(1518)/N(6)-dimethyladenosine(1519) in 16S rRNA + 4 S-adenosyl-L-homocysteine + 4 H(+). In terms of biological role, specifically dimethylates two adjacent adenosines (A1518 and A1519) in the loop of a conserved hairpin near the 3'-end of 16S rRNA in the 30S particle. May play a critical role in biogenesis of 30S subunits. In Listeria innocua serovar 6a (strain ATCC BAA-680 / CLIP 11262), this protein is Ribosomal RNA small subunit methyltransferase A.